The chain runs to 142 residues: Peptidyl-prolyl cis-trans isomerase FKBP2 (142 aa).

Residues 1-21 (MRLSWFRVLTVLSICLSAVAT) form the signal peptide. Residues 49-137 (GDVLHMHYTG…VFEVELLKIE (89 aa)) form the PPIase FKBP-type domain. The Prevents secretion from ER motif lies at 139–142 (RTEL).

The protein belongs to the FKBP-type PPIase family. FKBP2 subfamily. Interacts with ARFGEF1/BIG1 and the C-terminal of EPB41L2. T-cells and thymus.

Its subcellular location is the endoplasmic reticulum membrane. The enzyme catalyses [protein]-peptidylproline (omega=180) = [protein]-peptidylproline (omega=0). Inhibited by both FK506 and rapamycin. Its function is as follows. PPIases accelerate the folding of proteins. It catalyzes the cis-trans isomerization of proline imidic peptide bonds in oligopeptides. This is Peptidyl-prolyl cis-trans isomerase FKBP2 (FKBP2) from Homo sapiens (Human).